The chain runs to 314 residues: Small ribosomal subunit protein RACK1 (314 aa).

Phosphothreonine is present on T10. Residues 13 to 44 form a WD 1 repeat; it reads GHSGWVTSLSTAPENPDILLSGSRDKSIILWN. The residue at position 39 (S39) is a Phosphoserine. Y52 carries the post-translational modification Phosphotyrosine. WD repeat units follow at residues 61–91, 103–133, 146–178, 190–220, 231–260, and 281–311; these read GHSH…RLWD, GHTS…KIWN, GHSD…KVWD, GHTG…MLWD, EAKA…RIFD, and SSEP…RVWQ. S148 is modified (phosphoserine). Phosphoserine occurs at positions 242 and 255.

The protein belongs to the WD repeat G protein beta family. Ribosomal protein RACK1 subfamily. Component of the small ribosomal subunit (SSU). Mature yeast ribosomes consist of a small (40S) and a large (60S) subunit. The 40S small subunit contains 1 molecule of ribosomal RNA (18S rRNA) and at least 33 different proteins. The large 60S subunit contains 3 rRNA molecules (25S, 5.8S and 5S rRNA) and at least 46 different proteins. RACK1 is located at the head of the SSU in the vicinity of the mRNA exit channel. RACK1 interacts with the mRNA-binding protein SCP16. RACK1 also exists simultaneously as a homodimer in a cytosolic non-ribosome-bound form. Interacts with pck2. Interacts with pat1/ran1.

It localises to the cytoplasm. The protein resides in the membrane. Its function is as follows. Component of the ribosome, a large ribonucleoprotein complex responsible for the synthesis of proteins in the cell. The small ribosomal subunit (SSU) binds messenger RNAs (mRNAs) and translates the encoded message by selecting cognate aminoacyl-transfer RNA (tRNA) molecules. The large subunit (LSU) contains the ribosomal catalytic site termed the peptidyl transferase center (PTC), which catalyzes the formation of peptide bonds, thereby polymerizing the amino acids delivered by tRNAs into a polypeptide chain. The nascent polypeptides leave the ribosome through a tunnel in the LSU and interact with protein factors that function in enzymatic processing, targeting, and the membrane insertion of nascent chains at the exit of the ribosomal tunnel. Located at the head of the 40S ribosomal subunit in the vicinity of the mRNA exit channel, RACK1 serves as a scaffold protein that can recruit other proteins to the ribosome. Involved in induction of the ribosome quality control (RQC) pathway; a pathway that degrades nascent peptide chains during problematic translation. Involved in the negative regulation of translation of a specific subset of proteins. May be a receptor for protein kinase C in the regulation of actin cytoskeleton organization during cell wall synthesis and morphogenesis. Involved in the control of G2/M transition. May function as an anchoring protein for pat1/ran1 kinase. Negatively regulates the cell integrity transduction pathway by favoring translation of the tyrosine-phosphatases pyp1 and pyp2 that deactivate pmk1. Positively regulates the synthesis of the stress-responsive transcription factor Atf1 and the cytoplasmic catalase, a detoxificant enzyme induced by treatment with hydrogen peroxide. The protein is Small ribosomal subunit protein RACK1 of Schizosaccharomyces pombe (strain 972 / ATCC 24843) (Fission yeast).